Here is a 183-residue protein sequence, read N- to C-terminus: Nucleoplasmin-like protein NO29 (183 aa).

Over residues 126–166 (SDDEDLSGSEEEMEDEEEEEDDDDDDDDDDDDDDDDDEEEI) the composition is skewed to acidic residues. Residues 126 to 183 (SDDEDLSGSEEEMEDEEEEEDDDDDDDDDDDDDDDDDEEEITPIKPAKKPLKTLSRTF) are disordered.

It belongs to the nucleoplasmin family.

The protein localises to the nucleus. It localises to the nucleolus. The chain is Nucleoplasmin-like protein NO29 from Xenopus laevis (African clawed frog).